Consider the following 390-residue polypeptide: Formamidopyrimidine-DNA glycosylase (390 aa).

Proline 2 (schiff-base intermediate with DNA) is an active-site residue. The Proton donor role is filled by glutamate 3. Lysine 60 acts as the Proton donor; for beta-elimination activity in catalysis. Tyrosine 107, arginine 126, lysine 167, and asparagine 186 together coordinate DNA. Positions 283-390 (AEKAAKVRPA…AGKKPKGRKS (108 aa)) are disordered. The segment covering 301-316 (DDGDGEEDEQETEKED) has biased composition (acidic residues). A compositionally biased stretch (basic residues) spans 321-337 (SKKGQKPRGGRGKKPAS). The span at 343–355 (ESDDDGDDSEAEE) shows a compositional bias: acidic residues. Over residues 360–370 (PKGRGTKPAIK) the composition is skewed to basic residues.

This sequence belongs to the FPG family. As to quaternary structure, monomer. As to expression, expressed in leaves (at protein levels).

The protein resides in the nucleus. It catalyses the reaction Hydrolysis of DNA containing ring-opened 7-methylguanine residues, releasing 2,6-diamino-4-hydroxy-5-(N-methyl)formamidopyrimidine.. The enzyme catalyses 2'-deoxyribonucleotide-(2'-deoxyribose 5'-phosphate)-2'-deoxyribonucleotide-DNA = a 3'-end 2'-deoxyribonucleotide-(2,3-dehydro-2,3-deoxyribose 5'-phosphate)-DNA + a 5'-end 5'-phospho-2'-deoxyribonucleoside-DNA + H(+). In terms of biological role, involved in base excision repair of DNA damaged by oxidation or by mutagenic agents. Acts as a DNA glycosylase that recognizes and removes damaged bases. Can process efficiently 4,6-diamino-5-formamidopyrimidine (FapyA), 2,6-diamino-4- hydroxy-5-formamidopyrimidine (FapyG) and the further oxidation products of 8-oxoguanine (8-oxoG), such as guanidinohydantoin and spiroiminodihydantoin. Has marginal activity towards 8-oxoG. Has AP (apurinic/apyrimidinic) lyase activity. Cleaves the DNA backbone by beta-delta elimination to generate a single-strand break at the site of the removed base with both 3'- and 5'-phosphates. The protein is Formamidopyrimidine-DNA glycosylase (FPG1) of Arabidopsis thaliana (Mouse-ear cress).